The following is a 79-amino-acid chain: Acyl carrier protein (79 aa).

One can recognise a Carrier domain in the interval 3–78 (QEILEKVCSI…DAVKFIEEKK (76 aa)). At Ser-38 the chain carries O-(pantetheine 4'-phosphoryl)serine.

Belongs to the acyl carrier protein (ACP) family. In terms of processing, 4'-phosphopantetheine is transferred from CoA to a specific serine of apo-ACP by AcpS. This modification is essential for activity because fatty acids are bound in thioester linkage to the sulfhydryl of the prosthetic group.

It is found in the cytoplasm. It participates in lipid metabolism; fatty acid biosynthesis. Carrier of the growing fatty acid chain in fatty acid biosynthesis. The chain is Acyl carrier protein from Prochlorococcus marinus (strain MIT 9312).